The sequence spans 105 residues: Large ribosomal subunit protein eL30 (105 aa).

It belongs to the eukaryotic ribosomal protein eL30 family.

In Methanococcus vannielii (strain ATCC 35089 / DSM 1224 / JCM 13029 / OCM 148 / SB), this protein is Large ribosomal subunit protein eL30 (rpl30e).